Consider the following 472-residue polypeptide: Transmembrane protein 8B (472 aa).

Over residues 1–10 (MNMPQSLGTQ) the composition is skewed to low complexity. The segment at 1–24 (MNMPQSLGTQPLPPEPPSLGTPIE) is disordered. The Extracellular portion of the chain corresponds to 1–233 (MNMPQSLGTQ…ADALTYGFQL (233 aa)). N100 is a glycosylation site (N-linked (GlcNAc...) asparagine). The EGF-like domain occupies 182–221 (FLSPCVDDCGPYGQCKLLRTHNYLYAACECKAGWRGWGCT). Cystine bridges form between C186/C196, C190/C209, and C211/C220. Residues 234–254 (LSTLLLCLSNLMFLPPVVLAI) traverse the membrane as a helical segment. Residues 255–257 (RSR) lie on the Cytoplasmic side of the membrane. Residues 258-277 (YVLEAAVYTFTMFFSTFYHA) traverse the membrane as a helical segment. The Extracellular segment spans residues 278–292 (CDQPGIVVFCIMDYD). A helical transmembrane segment spans residues 293–313 (VLQFCDFLGSLMSVWVTVIAM). Residues 314–315 (AR) are Cytoplasmic-facing. Residues 316–336 (LQPVIKQVLYLLGAMLLSMAL) form a helical membrane-spanning segment. At 337–342 (QLDRHG) the chain is on the extracellular side. A helical transmembrane segment spans residues 343-363 (LWNLLGPSLFALGILATAWTV). The Cytoplasmic segment spans residues 364–379 (RSVRRRHCYPPTWRRW). Residues 380 to 400 (LFYLCPGSLIAGSAVLLYAFV) form a helical membrane-spanning segment. The Extracellular segment spans residues 401–405 (ETRDN). A helical transmembrane segment spans residues 406–426 (YFYIHSIWHMLIAGSVGFLLP). Residues 427 to 472 (PRAKTDRRVPSGARARGCGYQLCINEQEELGLVGPGGTTVSSICVS) are Cytoplasmic-facing.

Belongs to the TMEM8 family. May interact with EZR. In terms of processing, N-glycosylated.

It localises to the cell membrane. It is found in the cytoplasm. The protein localises to the nucleus. Its subcellular location is the mitochondrion. The protein resides in the endoplasmic reticulum. May function as a regulator of the EGFR pathway. Probable tumor suppressor which may function in cell growth, proliferation and adhesion. This is Transmembrane protein 8B (Tmem8b) from Mus musculus (Mouse).